The following is a 2052-amino-acid chain: Genome polyprotein (2052 aa).

2 consecutive short sequence motifs ((L)YPX(n)L motif) follow at residues 167–171 (YPHGL) and 200–205 (YPVWEL). The disordered stretch occupies residues 502–522 (TVSTEQNVPDPQVGIKGKANR). Positions 760-830 (MMSRIAAGDL…PRKMKGLFSQ (71 aa)) are involved in P1-2A pentamerization. The helical transmembrane segment at 1005–1025 (TVEIINIVLCFIKSGILLYVI) threads the bilayer. The membrane-penetrating ability stretch occupies residues 1037–1064 (IGLLRVMNYADIGCSVISCGKVFSKMLE). Residues 1121 to 1146 (KKKDVLNILKDNQQKIEKAIEEADNF) are a coiled coil. The chain crosses the membrane as a helical span at residues 1296 to 1316 (WVAVGAAVGILGLLVGGWFVY). At Tyr-1333 the chain carries O-(5'-phospho-RNA)-tyrosine. A Peptidase C3 domain is found at 1348–1562 (DPVESQSTLE…VAKLITQEMF (215 aa)). Residues His-1397, Asp-1437, and Cys-1525 each act as for protease 3C activity in the active site. Positions 1810-1931 (DVGLDLDFSA…VFSRDVQIDN (122 aa)) constitute a RdRp catalytic domain.

This sequence belongs to the picornaviridae polyprotein family. In terms of assembly, homodimer. Homomultimer; probably interacts with membranes in a multimeric form. Seems to assemble into amyloid-like fibers. As to quaternary structure, homodimer. Monomer. Interacts with protein 3CD. Interacts with host ACBD3. In terms of assembly, interacts with protein 3AB. As to quaternary structure, interacts with human MAVS. Homodimer; disulfide-linked. In terms of assembly, homopentamer. Homooligomer. As to quaternary structure, interacts with capsid protein VP2. Interacts with capsid protein VP3. Interacts with capsid protein VP1. Interacts with capsid protein VP3. In terms of assembly, interacts with capsid protein VP1. Interacts with capsid protein VP2. In terms of processing, specific enzymatic cleavages by viral protease in vivo yield a variety of precursors and mature proteins. Polyprotein processing intermediates are produced, such as P1-2A which is a functional precursor of the structural proteins, VP0 which is a VP4-VP2 precursor, VP1-2A precursor, 3ABC precursor which is a stable and catalytically active precursor of 3A, 3B and 3C proteins, 3AB and 3CD precursors. The assembly signal 2A is removed from VP1-2A by a host protease, possibly host Cathepsin L. This cleavage occurs over a region of 3 amino-acids probably generating VP1 proteins with heterogeneous C-termini. Post-translationally, during virion maturation, immature virions are rendered infectious following cleavage of VP0 into VP4 and VP2. This maturation seems to be an autocatalytic event triggered by the presence of RNA in the capsid and is followed by a conformational change of the particle. The assembly signal 2A is removed from VP1-2A by a host protease, possibly host Cathepsin L in naked virions. This cleavage does not occur in enveloped virions. This cleavage occurs over a region of 3 amino-acids probably generating VP1 proteins with heterogeneous C-termini. In terms of processing, VPg is uridylylated prior to priming replication into VPg-pUpU. Post-translationally, unlike other picornaviruses, does not seem to be myristoylated.

It is found in the virion. Its subcellular location is the host endosome. It localises to the host multivesicular body. The protein localises to the host membrane. The protein resides in the host mitochondrion outer membrane. It is found in the host cytoplasm. Its subcellular location is the host cytoplasmic vesicle membrane. The enzyme catalyses RNA(n) + a ribonucleoside 5'-triphosphate = RNA(n+1) + diphosphate. The catalysed reaction is a ribonucleoside 5'-triphosphate + H2O = a ribonucleoside 5'-diphosphate + phosphate + H(+). It carries out the reaction Selective cleavage of Gln-|-Gly bond in the poliovirus polyprotein. In other picornavirus reactions Glu may be substituted for Gln, and Ser or Thr for Gly.. Its function is as follows. Capsid proteins VP1, VP2, and VP3 form a closed capsid enclosing the viral positive strand RNA genome. All these proteins contain a beta-sheet structure called beta-barrel jelly roll. Together they form an icosahedral capsid (T=3) composed of 60 copies of each VP1, VP2, and VP3, with a diameter of approximately 300 Angstroms. VP1 is situated at the 12 fivefold axes, whereas VP2 and VP3 are located at the quasi-sixfold axes. The naked capsid interacts with the host receptor HAVCR1 to provide virion attachment to and probably entry into the target cell. Functionally, VP0 precursor is a component of the immature procapsids. Plays a role in the assembly of the 12 pentamers into an icosahedral structure. Has not been detected in mature virions, supposedly owing to its small size. In terms of biological role, precursor component of immature procapsids that corresponds to an extended form of the structural protein VP1. After maturation, possibly by the host Cathepsin L, the assembly signal 2A is cleaved to give rise to the mature VP1 protein. Its function is as follows. Functions as a viroporin. Affects membrane integrity and causes an increase in membrane permeability. Involved in host intracellular membrane rearrangements probably to give rise to the viral factories. Does not disrupt calcium homeostasis or glycoprotein trafficking. Antagonizes the innate immune response of the host by suppressing IFN-beta synthesis, which it achieves by interfering with the RIG-I/IFIH1 pathway. Functionally, affects membrane integrity and causes an increase in membrane permeability. Associates with and induces structural rearrangements of intracellular membranes. Displays RNA-binding activity. In terms of biological role, the precursor 3ABC is targeted to the mitochondrial membrane where protease 3C activity cleaves and inhibits the host antiviral protein MAVS, thereby disrupting activation of IRF3 through the IFIH1/MDA5 pathway. In vivo, the protease activity of 3ABC precursor is more efficient in cleaving the 2BC precursor than that of protein 3C. The 3ABC precursor may therefore play a role in the proteolytic processing of the polyprotein. Possible viroporin. Its function is as follows. Interacts with the 3CD precursor and with RNA structures found at both the 5'- and 3'-termini of the viral genome. Since the 3AB precursor contains the hydrophobic domain 3A, it probably anchors the whole viral replicase complex to intracellular membranes on which viral RNA synthesis occurs. Functionally, may serve as membrane anchor to the 3AB and 3ABC precursors via its hydrophobic domain. May interact with RNA. Acts as a primer for viral RNA replication and remains covalently bound to viral genomic RNA. VPg is uridylylated prior to priming replication into VPg-pUpU. The VPg-pUpU is then used as primer on the genomic RNA poly(A) by the RNA-dependent RNA polymerase to replicate the viral genome. In terms of biological role, cysteine protease that generates mature viral proteins from the precursor polyprotein. In addition to its proteolytic activity, it binds to viral RNA, and thus influences viral genome replication. RNA and substrate bind cooperatively to the protease. Cleaves IKBKG/NEMO to impair innate immune signaling. Cleaves host PABPC1 which may participate in the switch of viral translation to RNA synthesis. Its function is as follows. Interacts with the 3AB precursor and with RNA structures found at both the 5'- and 3'-termini of the viral genome. Disrupts TLR3 signaling by degrading the host adapter protein TICAM1/TRIF. Functionally, RNA-directed RNA polymerase 3D-POL replicates genomic and antigenomic RNA by recognizing replications specific signals. The polypeptide is Genome polyprotein (Homo sapiens (Human)).